The chain runs to 148 residues: Glutamyl-tRNA(Gln) amidotransferase subunit C, mitochondrial (148 aa).

The protein belongs to the GatC family. In terms of assembly, subunit of the heterotrimeric GatCAB amidotransferase (AdT) complex, composed of A, B and C subunits.

Its subcellular location is the mitochondrion. It carries out the reaction L-glutamyl-tRNA(Gln) + L-glutamine + ATP + H2O = L-glutaminyl-tRNA(Gln) + L-glutamate + ADP + phosphate + H(+). Allows the formation of correctly charged Gln-tRNA(Gln) through the transamidation of misacylated Glu-tRNA(Gln) in the mitochondria. The reaction takes place in the presence of glutamine and ATP through an activated gamma-phospho-Glu-tRNA(Gln). The polypeptide is Glutamyl-tRNA(Gln) amidotransferase subunit C, mitochondrial (Drosophila pseudoobscura pseudoobscura (Fruit fly)).